The primary structure comprises 417 residues: PRKCA-binding protein (417 aa).

Positions K22–Q105 constitute a PDZ domain. The Zn(2+) site is built by C44 and C46. T82 is subject to Phosphothreonine. The 214-residue stretch at L144–V357 folds into the AH domain. The disordered stretch occupies residues Q375 to S417. Residues E377–A393 show a composition bias toward acidic residues. The S-palmitoyl cysteine; by DHHC8 moiety is linked to residue C415.

Monomer and homodimer. Interacts with CXADR. Interacts presynaptically with the glutamate receptors GRIA2, GRIA3, GRIK3, isoform 3 of GRIA4, isoform A of GRM4, GRM7 and GRM8; with NAPA and NAPB; and with BTG2. The interaction with NAPA and NAPB disrupts the interaction with GRIA2, conducting to the internalization of GRIA2. Interacts with PRKCA; with the amine transporters SLC6A2 and SLC6A3; with the channels ASIC1 and ASIC2; with the GTP-binding proteins ARF1 and ARF3; with the ephrin receptor tyrosine kinases EPHA7, EPHB1 and EPHB2; with ERBB2 and through its PDZ domain with the C-terminal tail of PRLHR. Interacts with UNC5A. Interacts (via AH domain) with NCS1/FREQ; in a calcium-dependent manner. Interacts with F-actin and associates with the ARP2/3 complex. Interacts (via PDZ domain) with ARF1 (activated); the interaction blocks Arp2/3 complex inhibition. Interacts with SORCS3. Phosphorylation at Thr-82 appears to inhibit the interaction with AMPA receptors. Post-translationally, palmitoylation on Cys-415 is essential for long-term synaptic depression (LTD).

The protein localises to the cytoplasm. It is found in the perinuclear region. Its subcellular location is the membrane. The protein resides in the postsynaptic density. It localises to the synapse. The protein localises to the synaptosome. It is found in the cytoskeleton. Functionally, probable adapter protein that bind to and organize the subcellular localization of a variety of membrane proteins containing some PDZ recognition sequence. Involved in the clustering of various receptors, possibly by acting at the receptor internalization level. Plays a role in synaptic plasticity by regulating the trafficking and internalization of AMPA receptors. May be regulated upon PRKCA activation. May regulate ASIC1/ASIC3 channel. Regulates actin polymerization by inhibiting the actin-nucleating activity of the Arp2/3 complex; the function is competitive with nucleation promoting factors and is linked to neuronal morphology regulation and AMPA receptor (AMPAR) endocytosis. Via interaction with the Arp2/3 complex involved in regulation of synaptic plasicity of excitatory synapses and required for spine shrinkage during long-term depression (LTD). Involved in regulation of astrocyte morphology, antagonistic to Arp2/3 complex activator WASL/N-WASP function. The sequence is that of PRKCA-binding protein (PICK1) from Bos taurus (Bovine).